The chain runs to 158 residues: 2-C-methyl-D-erythritol 2,4-cyclodiphosphate synthase (158 aa).

A divalent metal cation is bound by residues D8 and H10. Residues D8–H10 and H34–S35 contribute to the 4-CDP-2-C-methyl-D-erythritol 2-phosphate site. H42 provides a ligand contact to a divalent metal cation. 4-CDP-2-C-methyl-D-erythritol 2-phosphate is bound by residues D56–G58, F61–D65, A100–A106, T132–E135, F139, and R142.

This sequence belongs to the IspF family. As to quaternary structure, homotrimer. The cofactor is a divalent metal cation.

The enzyme catalyses 4-CDP-2-C-methyl-D-erythritol 2-phosphate = 2-C-methyl-D-erythritol 2,4-cyclic diphosphate + CMP. It functions in the pathway isoprenoid biosynthesis; isopentenyl diphosphate biosynthesis via DXP pathway; isopentenyl diphosphate from 1-deoxy-D-xylulose 5-phosphate: step 4/6. Functionally, involved in the biosynthesis of isopentenyl diphosphate (IPP) and dimethylallyl diphosphate (DMAPP), two major building blocks of isoprenoid compounds. Catalyzes the conversion of 4-diphosphocytidyl-2-C-methyl-D-erythritol 2-phosphate (CDP-ME2P) to 2-C-methyl-D-erythritol 2,4-cyclodiphosphate (ME-CPP) with a corresponding release of cytidine 5-monophosphate (CMP). The protein is 2-C-methyl-D-erythritol 2,4-cyclodiphosphate synthase of Sodalis glossinidius (strain morsitans).